A 485-amino-acid chain; its full sequence is NGFI-A-binding protein 1 (485 aa).

Positions 4–82 are NCD1; that stretch reads ALPRTLGELQ…RDWVTNPGLF (79 aa). Residues lysine 126, lysine 129, and lysine 143 each participate in a glycyl lysine isopeptide (Lys-Gly) (interchain with G-Cter in SUMO2) cross-link. A disordered region spans residues 160–187; sequence WQGHHATESEHSLSPADVGSPASPKESS. Residues serine 171 and serine 182 each carry the phosphoserine modification. Lysine 211 is covalently cross-linked (Glycyl lysine isopeptide (Lys-Gly) (interchain with G-Cter in SUMO2)). The interval 220-309 is NCD2; the sequence is LLKNNKKLAK…ARQVSREVTY (90 aa). Residues 306 to 337 are necessary for nuclear localization; that stretch reads EVTYKYTYRTTRLKCGERDELSPKRIKVEDGF. Residue serine 327 is modified to Phosphoserine. Residue lysine 332 forms a Glycyl lysine isopeptide (Lys-Gly) (interchain with G-Cter in SUMO1); alternate linkage. Residue lysine 332 forms a Glycyl lysine isopeptide (Lys-Gly) (interchain with G-Cter in SUMO2); alternate linkage. Glycyl lysine isopeptide (Lys-Gly) (interchain with G-Cter in SUMO2) cross-links involve residues lysine 354, lysine 368, and lysine 372. The interval 398–432 is disordered; sequence RQSSGEHSPDGLPSDGSDGQGERPLNLRMPNVQNR. Serine 405 carries the post-translational modification Phosphoserine. Residues lysine 452, lysine 463, and lysine 475 each participate in a glycyl lysine isopeptide (Lys-Gly) (interchain with G-Cter in SUMO2) cross-link. Lysine 478 is covalently cross-linked (Glycyl lysine isopeptide (Lys-Gly) (interchain with G-Cter in SUMO1); alternate). A Glycyl lysine isopeptide (Lys-Gly) (interchain with G-Cter in SUMO2); alternate cross-link involves residue lysine 478.

This sequence belongs to the NAB family. Homomultimers may associate with EGR1 bound to DNA.

It is found in the nucleus. In terms of biological role, acts as a transcriptional repressor for zinc finger transcription factors EGR1 and EGR2. In Mesocricetus auratus (Golden hamster), this protein is NGFI-A-binding protein 1 (NAB1).